A 209-amino-acid polypeptide reads, in one-letter code: NADH-quinone oxidoreductase subunit C (209 aa).

Belongs to the complex I 30 kDa subunit family. As to quaternary structure, NDH-1 is composed of 14 different subunits. Subunits NuoB, C, D, E, F, and G constitute the peripheral sector of the complex.

The protein resides in the cell inner membrane. It carries out the reaction a quinone + NADH + 5 H(+)(in) = a quinol + NAD(+) + 4 H(+)(out). NDH-1 shuttles electrons from NADH, via FMN and iron-sulfur (Fe-S) centers, to quinones in the respiratory chain. The immediate electron acceptor for the enzyme in this species is believed to be ubiquinone. Couples the redox reaction to proton translocation (for every two electrons transferred, four hydrogen ions are translocated across the cytoplasmic membrane), and thus conserves the redox energy in a proton gradient. The sequence is that of NADH-quinone oxidoreductase subunit C from Phenylobacterium zucineum (strain HLK1).